Consider the following 196-residue polypeptide: Putative 3-methyladenine DNA glycosylase (196 aa).

This sequence belongs to the DNA glycosylase MPG family.

This chain is Putative 3-methyladenine DNA glycosylase (yxlJ), found in Bacillus subtilis (strain 168).